A 350-amino-acid chain; its full sequence is RING finger protein 44 (350 aa).

The RING-type; atypical zinc finger occupies 298-339; the sequence is CVVCFSDFEVRQLLRVLPCNHEFHAKCVDKWLKANRTCPICR.

This chain is RING finger protein 44 (Rnf44), found in Rattus norvegicus (Rat).